The primary structure comprises 102 residues: NADH-quinone oxidoreductase subunit K (102 aa).

The next 3 membrane-spanning stretches (helical) occupy residues 6–26 (MEHGLLLAAILFCIGLCGLLI), 30–50 (LLFILMSIEIMMNASALAFVV), and 65–85 (ILVISLAAAEASIGLALLLLL).

It belongs to the complex I subunit 4L family. NDH-1 is composed of 14 different subunits. Subunits NuoA, H, J, K, L, M, N constitute the membrane sector of the complex.

The protein resides in the cell inner membrane. The enzyme catalyses a quinone + NADH + 5 H(+)(in) = a quinol + NAD(+) + 4 H(+)(out). In terms of biological role, NDH-1 shuttles electrons from NADH, via FMN and iron-sulfur (Fe-S) centers, to quinones in the respiratory chain. The immediate electron acceptor for the enzyme in this species is believed to be ubiquinone. Couples the redox reaction to proton translocation (for every two electrons transferred, four hydrogen ions are translocated across the cytoplasmic membrane), and thus conserves the redox energy in a proton gradient. The polypeptide is NADH-quinone oxidoreductase subunit K (Aeromonas salmonicida (strain A449)).